The chain runs to 132 residues: Small ribosomal subunit protein uS8 (132 aa).

The protein belongs to the universal ribosomal protein uS8 family. In terms of assembly, part of the 30S ribosomal subunit. Contacts proteins S5 and S12.

In terms of biological role, one of the primary rRNA binding proteins, it binds directly to 16S rRNA central domain where it helps coordinate assembly of the platform of the 30S subunit. In Gluconobacter oxydans (strain 621H) (Gluconobacter suboxydans), this protein is Small ribosomal subunit protein uS8.